A 535-amino-acid polypeptide reads, in one-letter code: Large neutral amino acids transporter small subunit 2 (535 aa).

Positions 1-17 (MEEGARHRNNTEKKHPG) are enriched in basic and acidic residues. Residues 1–30 (MEEGARHRNNTEKKHPGGGESDASPEAGSG) form a disordered region. Residues 1–44 (MEEGARHRNNTEKKHPGGGESDASPEAGSGGGGVALKKEIGLVS) are Cytoplasmic-facing. Phosphoserine is present on S29. Residues 45–65 (ACGIIVGNIIGSGIFVSPKGV) form a helical membrane-spanning segment. I53 contacts L-leucine. Residues 66 to 73 (LENAGSVG) are Extracellular-facing. The chain crosses the membrane as a helical span at residues 74-95 (LALIVWIVTGFITVVGALCYAE). The Cytoplasmic portion of the chain corresponds to 96-116 (LGVTIPKSGGDYSYVKDIFGG). A helical membrane pass occupies residues 117-149 (LAGFLRLWIAVLVIYPTNQAVIALTFSNYVLQP). N134 contributes to the L-tryptophan binding site. At 150-157 (LFPTCFPP) the chain is on the extracellular side. Residues 158–178 (ESGLRLLAAICLLLLTWVNCS) form a helical membrane-spanning segment. Over 179–181 (SVR) the chain is Cytoplasmic. Residues 182-210 (WATRVQDIFTAGKLLALALIIIMGIVQIC) form a helical membrane-spanning segment. Residues 211–230 (KGEYFWLEPKNAFENFQEPD) are Extracellular-facing. The helical transmembrane segment at 231-252 (IGLVALAFLQGSFAYGGWNFLN) threads the bilayer. G246 contacts L-leucine. The Cytoplasmic portion of the chain corresponds to 253–265 (YVTEELVDPYKNL). A helical transmembrane segment spans residues 266–287 (PRAIFISIPLVTFVYVFANVAY). At 288–312 (VTAMSPQELLASNAVAVTFGEKLLG) the chain is on the extracellular side. A helical transmembrane segment spans residues 313 to 338 (VMAWIMPISVALSTFGGVNGSLFTSS). The Cytoplasmic segment spans residues 339-364 (RLFFAGAREGHLPSVLAMIHVKRCTP). Residues 365 to 382 (IPALLFTCISTLLMLVTS) form a helical membrane-spanning segment. Residues 383-386 (DMYT) are Extracellular-facing. Residues 387-408 (LINYVGFINYLFYGVTVAGQIV) form a helical membrane-spanning segment. Residue N395 participates in L-tryptophan binding. Residues 409–423 (LRWKKPDIPRPIKIN) lie on the Cytoplasmic side of the membrane. Helical transmembrane passes span 424–446 (LLFP…WSEP) and 447–466 (VVCG…YFLG). Topologically, residues 467-535 (VYWQHKPKCF…DKDVAGQPQP (69 aa)) are cytoplasmic. Residues 502–535 (SGTEEANEDMEEQQQPMYQPTPTKDKDVAGQPQP) form a disordered region. Residues 514–523 (QQQPMYQPTP) show a composition bias toward polar residues.

It belongs to the amino acid-polyamine-organocation (APC) superfamily. L-type amino acid transporter (LAT) (TC 2.A.3.8) family. As to quaternary structure, disulfide-linked heterodimer composed of the catalytic light chain subunit SLC7A8 and the heavy chain subunit SLC3A2. SLC3A2 acts as chaperones for correct plasma membrane trafficking and stabilization of SLC7A8 and modulates the substrate affinity and specificity of SLC7A8. ICAM-1 associates with the heterodimer SLC3A2/SLC7A8; this interaction regulates SLC7A8 activity. In terms of tissue distribution, strongest expression is observed in kidney and moderate expression in placenta and brain, followed by liver, prostate, testis, ovary, lymph node, thymus, spleen, skeletal muscle and heart. Also expressed in fetal liver as well as in the retinal pigment epithelial cell line ARPE-19 and the intestinal epithelial cell line Caco-2.

The protein localises to the cell membrane. It localises to the basolateral cell membrane. It catalyses the reaction L-histidine(in) + L-phenylalanine(out) = L-histidine(out) + L-phenylalanine(in). The enzyme catalyses L-tryptophan(in) + L-phenylalanine(out) = L-tryptophan(out) + L-phenylalanine(in). It carries out the reaction L-isoleucine(in) + L-phenylalanine(out) = L-isoleucine(out) + L-phenylalanine(in). The catalysed reaction is L-valine(in) + L-phenylalanine(out) = L-valine(out) + L-phenylalanine(in). It catalyses the reaction L-leucine(in) + L-phenylalanine(out) = L-leucine(out) + L-phenylalanine(in). The enzyme catalyses L-glutamine(in) + L-phenylalanine(out) = L-glutamine(out) + L-phenylalanine(in). It carries out the reaction L-cysteine(in) + L-phenylalanine(out) = L-cysteine(out) + L-phenylalanine(in). The catalysed reaction is L-phenylalanine(out) + L-methionine(in) = L-phenylalanine(in) + L-methionine(out). It catalyses the reaction L-leucine(out) + L-methionine(in) = L-leucine(in) + L-methionine(out). The enzyme catalyses L-cysteine(out) + L-methionine(in) = L-cysteine(in) + L-methionine(out). It carries out the reaction S-methylmercury-L-cysteine(out) + L-methionine(in) = S-methylmercury-L-cysteine(in) + L-methionine(out). The catalysed reaction is S-methylmercury-L-cysteine(in) + L-leucine(out) = S-methylmercury-L-cysteine(out) + L-leucine(in). It catalyses the reaction S-methylmercury-L-cysteine(in) + L-phenylalanine(out) = S-methylmercury-L-cysteine(out) + L-phenylalanine(in). The enzyme catalyses L-phenylalanine(out) + L-serine(in) = L-phenylalanine(in) + L-serine(out). It carries out the reaction L-phenylalanine(out) + glycine(in) = L-phenylalanine(in) + glycine(out). The catalysed reaction is L-phenylalanine(out) + L-alanine(in) = L-phenylalanine(in) + L-alanine(out). It catalyses the reaction 3,3'-diiodo-L-thyronine(out) = 3,3'-diiodo-L-thyronine(in). The enzyme catalyses 3,3',5-triiodo-L-thyronine(out) = 3,3',5-triiodo-L-thyronine(in). It carries out the reaction L-dopa(out) + L-phenylalanine(in) = L-dopa(in) + L-phenylalanine(out). With respect to regulation, inhibited by the L-type inhibitor 2-Aminobicyclo-(2,2,1)-heptane-2-carboxylic acid (BCH). In terms of biological role, associates with SLC3A2 to form a functional heterodimeric complex that translocates small and large neutral amino acids with broad specificity and a stoichiometry of 1:1. Functions as amino acid antiporter mediating the influx of extracellular essential amino acids mainly in exchange with the efflux of highly concentrated intracellular amino acids. Has relatively symmetrical selectivities but strongly asymmetrical substrate affinities at both the intracellular and extracellular sides of the transporter. This asymmetry allows SLC7A8 to regulate intracellular amino acid pools (mM concentrations) by exchange with external amino acids (uM concentration range), equilibrating the relative concentrations of different amino acids across the plasma membrane instead of mediating their net uptake. May play an essential role in the reabsorption of neutral amino acids from the epithelial cells to the bloodstream in the kidney. Involved in the uptake of methylmercury (MeHg) when administered as the L-cysteine or D,L-homocysteine complexes, and hence plays a role in metal ion homeostasis and toxicity. Involved in the cellular activity of small molecular weight nitrosothiols, via the stereoselective transport of L-nitrosocysteine (L-CNSO) across the transmembrane. Imports the thyroid hormone diiodothyronine (T2) and to a smaller extent triiodothyronine (T3) but not rT 3 or thyroxine (T4). Mediates the uptake of L-DOPA. May participate in auditory function. In Homo sapiens (Human), this protein is Large neutral amino acids transporter small subunit 2.